The chain runs to 289 residues: MSTFKLLKTLTSRRQVLKTGLAALTLSGMSHAVAKEETLKTSNGHSKPKTKKTGSKRLVMLDPGHGGIDTGAIGRNGSQEKHVVLAIAKNVRAILRNHGIDARLTRTGDTFIPLYDRVEIAHKHGADLFMSIHADGFTNPKAAGASVFALSNRGASSAMAKYLSERENRADEVAGKKATDRDHLLQQVLFDLVQTDTIKNSLTLGSHILKKIKPIHKLHSRTTEQAAFVVLKSPSIPSVLVETSFITNPEEERLLGTTAFRQKIATAIANGIISYFHWFDNQKAHTKKR.

A signal peptide (tat-type signal) is located at residues 1–34 (MSTFKLLKTLTSRRQVLKTGLAALTLSGMSHAVA). Residues 36 to 61 (EETLKTSNGHSKPKTKKTGSKRLVML) form a disordered region. Positions 46–55 (SKPKTKKTGS) are enriched in basic residues. Residues 59–273 (VMLDPGHGGI…IATAIANGII (215 aa)) form the MurNAc-LAA domain.

The protein belongs to the N-acetylmuramoyl-L-alanine amidase 3 family. In terms of processing, predicted to be exported by the Tat system. The position of the signal peptide cleavage has not been experimentally proven.

Its subcellular location is the periplasm. The enzyme catalyses Hydrolyzes the link between N-acetylmuramoyl residues and L-amino acid residues in certain cell-wall glycopeptides.. Functionally, cell-wall hydrolase involved in septum cleavage during cell division. This Salmonella typhimurium (strain LT2 / SGSC1412 / ATCC 700720) protein is N-acetylmuramoyl-L-alanine amidase AmiA (amiA).